We begin with the raw amino-acid sequence, 312 residues long: uncharacterized protein (312 aa).

A run of 6 helical transmembrane segments spans residues 9–29, 115–135, 187–207, 224–244, 264–284, and 292–312; these read LTLT…GLFI, LATL…IGFI, ITIA…DYIT, ITVA…AGEF, ILSS…IYGF, and MIST…TLIL.

The protein resides in the cell membrane. This is an uncharacterized protein from Methanocaldococcus jannaschii (strain ATCC 43067 / DSM 2661 / JAL-1 / JCM 10045 / NBRC 100440) (Methanococcus jannaschii).